We begin with the raw amino-acid sequence, 701 residues long: Low-density lipoprotein receptor-related protein 12 (701 aa).

Residues Gly-1–Arg-334 are Extracellular-facing. 2 consecutive LDL-receptor class A domains span residues Asn-7–Ala-43 and Pro-56–Asp-97. 7 disulfides stabilise this stretch: Cys-8-Cys-20, Cys-15-Cys-33, Cys-27-Cys-42, Cys-57-Cys-74, Cys-64-Cys-87, Cys-81-Cys-96, and Cys-101-Cys-127. One can recognise a CUB domain in the interval Cys-101–Asp-214. Asn-126 and Asn-208 each carry an N-linked (GlcNAc...) asparagine glycan. LDL-receptor class A domains lie at Phe-216 to Thr-253, Met-254 to Phe-291, and Phe-292 to Pro-328. 9 disulfides stabilise this stretch: Cys-217/Cys-230, Cys-224/Cys-243, Cys-237/Cys-252, Cys-255/Cys-268, Cys-262/Cys-281, Cys-275/Cys-290, Cys-293/Cys-305, Cys-300/Cys-318, and Cys-312/Cys-327. N-linked (GlcNAc...) asparagine glycosylation occurs at Asn-251. Asn-283 is a glycosylation site (N-linked (GlcNAc...) asparagine). A helical transmembrane segment spans residues Val-335–Gly-355. Residues Cys-356–Cys-701 lie on the Cytoplasmic side of the membrane. 4 disordered regions span residues Ala-465–Lys-520, Ala-535–Arg-565, Ser-590–Asp-612, and Asp-643–Asp-665. 2 stretches are compositionally biased toward polar residues: residues Ser-590–Leu-599 and Asp-643–Asn-656.

This sequence belongs to the LDLR family. As to quaternary structure, may interact with RACK1, ZFYVE9 and NMRK2.

Its subcellular location is the membrane. It localises to the coated pit. Functionally, probable receptor, which may be involved in the internalization of lipophilic molecules and/or signal transduction. May act as a tumor suppressor. The polypeptide is Low-density lipoprotein receptor-related protein 12 (LRP12) (Macaca fascicularis (Crab-eating macaque)).